The sequence spans 307 residues: UDP-N-acetylenolpyruvoylglucosamine reductase (307 aa).

Residues 33–197 form the FAD-binding PCMH-type domain; it reads TGGNADFYIT…LEAAFTLAPG (165 aa). Residue Arg176 is part of the active site. The Proton donor role is filled by Ser226. Glu296 is a catalytic residue.

It belongs to the MurB family. The cofactor is FAD.

The protein localises to the cytoplasm. It carries out the reaction UDP-N-acetyl-alpha-D-muramate + NADP(+) = UDP-N-acetyl-3-O-(1-carboxyvinyl)-alpha-D-glucosamine + NADPH + H(+). Its pathway is cell wall biogenesis; peptidoglycan biosynthesis. In terms of biological role, cell wall formation. This Staphylococcus aureus (strain Mu3 / ATCC 700698) protein is UDP-N-acetylenolpyruvoylglucosamine reductase.